We begin with the raw amino-acid sequence, 113 residues long: U10-theraphotoxin-Hs2a (113 aa).

Residues 1-21 (MNTVRVTFLLVFVLAVSLGQA) form the signal peptide. Residues 22–67 (DEDGNRMEKRQKKTEAENLLLPKLEELDAKLWEEDSVESRNSRQKR) constitute a propeptide that is removed on maturation. Cystine bridges form between C68–C86, C75–C91, and C85–C106.

It belongs to the neurotoxin 14 (magi-1) family. 02 (HWTX-XVIc) subfamily. As to expression, expressed by the venom gland.

It localises to the secreted. Probable ion channel inhibitor. The sequence is that of U10-theraphotoxin-Hs2a from Cyriopagopus schmidti (Chinese bird spider).